Consider the following 557-residue polypeptide: DNA mismatch repair protein MutL (557 aa).

The protein belongs to the DNA mismatch repair MutL/HexB family.

Functionally, this protein is involved in the repair of mismatches in DNA. It is required for dam-dependent methyl-directed DNA mismatch repair. May act as a 'molecular matchmaker', a protein that promotes the formation of a stable complex between two or more DNA-binding proteins in an ATP-dependent manner without itself being part of a final effector complex. The chain is DNA mismatch repair protein MutL from Methanothrix thermoacetophila (strain DSM 6194 / JCM 14653 / NBRC 101360 / PT) (Methanosaeta thermophila).